The primary structure comprises 486 residues: MAPVRGILGLQRAVSIWKESNRLTPALRSFSTQAASTSTTPQPPPPPPPPEKTHFGGLKDEDRIFTNLYGLHDPFLKGAMKRGDWHRTKDLVLKGTDWIVNEMKKSGLRGRGGAGFPSGLKWSFMPKVSDGRPSYLVVNADESEPGTCKDREIMRHDPHKLLEGCLIAGVGMRASAAYIYIRGEYVNERLNLEKARREAYAAGLLGKNACGSGYDFEVYIHFGAGAYICGEETALLESLEGKQGKPRLKPPFPANAGLYGCPTTVTNVETVAVSPTILRRGPEWFSSFGRKNNAGTKLFCISGHVNKPCTVEEEMSIPLKELIERHCGGVRGGWDNLLAIIPGGSSVPLIPKNICEDVLMDFDALKAVQSGLGTAAVIVMDKSTDVVDAIARLSYFYKHESCGQCTPCREGTGWLWMIMERMKVGNAKLEEIDMLQEVTKQIEGHTICALGDAAAWPVQGLIRHFRPELERRIRERAERELLQAAA.

A mitochondrion-targeting transit peptide spans 1–30 (MAPVRGILGLQRAVSIWKESNRLTPALRSF). Residues 31–40 (STQAASTSTT) are compositionally biased toward low complexity. The tract at residues 31–57 (STQAASTSTTPQPPPPPPPPEKTHFGG) is disordered. Pro residues predominate over residues 41–50 (PQPPPPPPPP). 110–119 (GRGGAGFPSG) contacts NADH. Position 222-270 (222-270 (FGAGAYICGEETALLESLEGKQGKPRLKPPFPANAGLYGCPTTVTNVET)) interacts with FMN. Cys-402, Cys-405, Cys-408, and Cys-448 together coordinate [4Fe-4S] cluster.

The protein belongs to the complex I 51 kDa subunit family. As to quaternary structure, complex I is composed of at least 49 different subunits. This is a component of the flavoprotein-sulfur (FP) fragment of the enzyme. FMN serves as cofactor. It depends on [4Fe-4S] cluster as a cofactor.

Its subcellular location is the mitochondrion inner membrane. The catalysed reaction is a ubiquinone + NADH + 5 H(+)(in) = a ubiquinol + NAD(+) + 4 H(+)(out). Its function is as follows. Core subunit of the mitochondrial membrane respiratory chain NADH dehydrogenase (Complex I) that is believed to belong to the minimal assembly required for catalysis. Complex I functions in the transfer of electrons from NADH to the respiratory chain. The immediate electron acceptor for the enzyme is believed to be ubiquinone. The sequence is that of NADH dehydrogenase [ubiquinone] flavoprotein 1, mitochondrial from Arabidopsis thaliana (Mouse-ear cress).